We begin with the raw amino-acid sequence, 372 residues long: GDP-mannose transporter GONST3 (372 aa).

The next 10 membrane-spanning stretches (helical) occupy residues 33–53 (ASVY…SIIN), 60–80 (FPYP…GVLL), 92–112 (LNLL…LSLF), 125–145 (TFIV…TLFL), 155–175 (WGSL…DYQF), 177–197 (IAAY…FVYI), 209–229 (WGLV…ELLI), 251–271 (VVLP…FGFS), 280–300 (GFTV…LMVW), and 303–323 (HSTF…VMYQ). The segment at 331 to 372 (NATQEAKPQEQDEEQEKLLEMQENKESNSVDIKETLKSEEKL) is disordered. Residues 346 to 372 (EKLLEMQENKESNSVDIKETLKSEEKL) are compositionally biased toward basic and acidic residues.

It belongs to the nucleotide-sugar transporter family. GDP-Mannose:GMP antiporter (GMA) (TC 2.A.7.13) subfamily. Expressed in rosette leaves, stems, flowers and siliques.

It localises to the golgi apparatus membrane. Its function is as follows. GDP-mannose transporter that may be involved in the import of GDP-mannose from the cytoplasm into the Golgi lumen. In Arabidopsis thaliana (Mouse-ear cress), this protein is GDP-mannose transporter GONST3.